Here is a 120-residue protein sequence, read N- to C-terminus: MFLLQKYDYFFVFLLIISFFSILIFSLSKWIAPINKGPEKFTSYESGIEPMGEACIQFQIRYYMFALVFVIFDVETVFLYPWAMSFYNFGISSFIEALIFILILIIGLVYAWRKGALEWS.

Transmembrane regions (helical) follow at residues 7–27 (YDYF…IFSL), 64–84 (MFAL…PWAM), and 89–109 (FGIS…IGLV).

This sequence belongs to the complex I subunit 3 family. NDH is composed of at least 16 different subunits, 5 of which are encoded in the nucleus.

It is found in the plastid. It localises to the chloroplast thylakoid membrane. It catalyses the reaction a plastoquinone + NADH + (n+1) H(+)(in) = a plastoquinol + NAD(+) + n H(+)(out). The enzyme catalyses a plastoquinone + NADPH + (n+1) H(+)(in) = a plastoquinol + NADP(+) + n H(+)(out). Its function is as follows. NDH shuttles electrons from NAD(P)H:plastoquinone, via FMN and iron-sulfur (Fe-S) centers, to quinones in the photosynthetic chain and possibly in a chloroplast respiratory chain. The immediate electron acceptor for the enzyme in this species is believed to be plastoquinone. Couples the redox reaction to proton translocation, and thus conserves the redox energy in a proton gradient. In Marchantia polymorpha (Common liverwort), this protein is NAD(P)H-quinone oxidoreductase subunit 3, chloroplastic.